Reading from the N-terminus, the 278-residue chain is Large ribosomal subunit protein uL2 (278 aa).

2 disordered regions span residues 1–20 and 225–278; these read MGIRKYKPTTPGRRGSSVSD and VMNP…GKKR. A compositionally biased stretch (basic residues) spans 258–278; that stretch reads RNKKKASSRLIVRRRKSGKKR.

The protein belongs to the universal ribosomal protein uL2 family. As to quaternary structure, part of the 50S ribosomal subunit. Forms a bridge to the 30S subunit in the 70S ribosome.

In terms of biological role, one of the primary rRNA binding proteins. Required for association of the 30S and 50S subunits to form the 70S ribosome, for tRNA binding and peptide bond formation. It has been suggested to have peptidyltransferase activity; this is somewhat controversial. Makes several contacts with the 16S rRNA in the 70S ribosome. In Cutibacterium acnes (strain DSM 16379 / KPA171202) (Propionibacterium acnes), this protein is Large ribosomal subunit protein uL2.